The following is a 926-amino-acid chain: DNA mismatch repair protein MutS (926 aa).

Residues 16–40 (VASTPTRRGRPPGSSAARASNGAGS) form a disordered region. Residues 26 to 40 (PPGSSAARASNGAGS) are compositionally biased toward low complexity. 658–665 (GPNMAGKS) contributes to the ATP binding site.

It belongs to the DNA mismatch repair MutS family.

Functionally, this protein is involved in the repair of mismatches in DNA. It is possible that it carries out the mismatch recognition step. This protein has a weak ATPase activity. The chain is DNA mismatch repair protein MutS from Granulibacter bethesdensis (strain ATCC BAA-1260 / CGDNIH1).